A 278-amino-acid polypeptide reads, in one-letter code: Small ribosomal subunit protein uS5 (278 aa).

A disordered region spans residues 1–43; the sequence is MADAPAPAGGRGGFRGGFGGRGRGRGRGRGRGRGRGRGAKDGD. Residues 9-21 show a composition bias toward gly residues; sequence GGRGGFRGGFGGR. A compositionally biased stretch (basic residues) spans 22 to 37; the sequence is GRGRGRGRGRGRGRGR. Residues 88-151 enclose the S5 DRBM domain; that stretch reads LKDEVLKIMP…ILAKLSVVPV (64 aa).

It belongs to the universal ribosomal protein uS5 family.

Its function is as follows. Component of the ribosome, a large ribonucleoprotein complex responsible for the synthesis of proteins in the cell. The small ribosomal subunit (SSU) binds messenger RNAs (mRNAs) and translates the encoded message by selecting cognate aminoacyl-transfer RNA (tRNA) molecules. The large subunit (LSU) contains the ribosomal catalytic site termed the peptidyl transferase center (PTC), which catalyzes the formation of peptide bonds, thereby polymerizing the amino acids delivered by tRNAs into a polypeptide chain. The nascent polypeptides leave the ribosome through a tunnel in the LSU and interact with protein factors that function in enzymatic processing, targeting, and the membrane insertion of nascent chains at the exit of the ribosomal tunnel. Plays a role in the assembly and function of the 40S ribosomal subunit. Mutations in this protein affects the control of translational fidelity. Involved in nucleolar processing of pre-18S ribosomal RNA and ribosome assembly. This is Small ribosomal subunit protein uS5 (RPS2) from Urechis caupo (Innkeeper worm).